Reading from the N-terminus, the 373-residue chain is COP9 signalosome complex subunit 5 (373 aa).

The MPN domain occupies C66–K201. 3 residues coordinate Zn(2+): H147, H149, and D160. The short motif at H147–D160 is the JAMM motif element. Residues F289–I325 are disordered. The span at N295–R306 shows a compositional bias: low complexity.

This sequence belongs to the peptidase M67A family. CSN5 subfamily. Component of the COP9 signalosome (CSN) complex.

The protein resides in the cytoplasm. The protein localises to the nucleus. Functionally, catalytic Component of the COP9 signalosome (CSN) complex that acts as an regulator of the ubiquitin (Ubl) conjugation pathway by mediating the deneddylation of the cullin subunit of SCF-type E3 ubiquitin-protein ligase complexes. The CNS complex is involved in the regulation of the mating pheromone response. This is COP9 signalosome complex subunit 5 (RRI1) from Kluyveromyces lactis (strain ATCC 8585 / CBS 2359 / DSM 70799 / NBRC 1267 / NRRL Y-1140 / WM37) (Yeast).